Here is a 1107-residue protein sequence, read N- to C-terminus: DNA polymerase delta catalytic subunit (1107 aa).

Residues Met1–Phe34 are disordered. The Nuclear localization signal signature appears at Lys4–Arg19. Position 19 is an omega-N-methylarginine (Arg19). Lys574 participates in a covalent cross-link: Glycyl lysine isopeptide (Lys-Gly) (interchain with G-Cter in SUMO2). Zn(2+)-binding residues include Cys1012, Cys1015, Cys1026, and Cys1029. Residues Cys1012–Cys1029 form a CysA-type zinc finger. Residues Cys1058, Cys1061, Cys1071, and Cys1076 each contribute to the [4Fe-4S] cluster site. The CysB motif motif lies at Cys1058–Cys1076.

This sequence belongs to the DNA polymerase type-B family. As to quaternary structure, component of the tetrameric DNA polymerase delta complex (Pol-delta4), which consists of POLD1/p125, POLD2/p50, POLD3/p66/p68 and POLD4/p12, with POLD1 bearing both DNA polymerase and 3' to 5' proofreading exonuclease activities. Within Pol-delta4, directly interacts with POLD2 and POLD4. Following genotoxic stress by DNA-damaging agents, such as ultraviolet light and methyl methanesulfonate, or by replication stress induced by treatment with hydroxyurea or aphidicolin, Pol-delta4 is converted into a trimeric form of the complex (Pol-delta3) by POLD4 degradation. Pol-delta3 is the major form at S phase replication sites and DNA damage sites. POLD1 displays different catalytic properties depending upon the complex it is found in. It exhibits higher proofreading activity and fidelity than Pol-delta4, making it particularly well suited to respond to DNA damage. Directly interacts with PCNA, as do POLD3 and POLD4; this interaction stimulates Pol-delta4 polymerase activity. As POLD2 and POLD4, directly interacts with WRNIP1; this interaction stimulates DNA polymerase delta-mediated DNA synthesis, independently of the presence of PCNA. This stimulation may be due predominantly to an increase of initiation frequency and also to increased processivity. Also observed as a dimeric complex with POLD2 (Pol-delta2 complex). Pol-delta2 is relatively insensitive to the PCNA stimulation (2-5-fold) compared to Pol-delta4 that is stimulated by over 50-fold. The DNA polymerase delta complex interacts with POLDIP2; this interaction is probably mediated through direct binding to POLD2. Interacts with CIAO1. Interacts with POLDIP2. Interacts with RFC1. Requires [4Fe-4S] cluster as cofactor. Widely expressed, with high levels of expression in heart and lung.

Its subcellular location is the nucleus. The enzyme catalyses DNA(n) + a 2'-deoxyribonucleoside 5'-triphosphate = DNA(n+1) + diphosphate. Its activity is regulated as follows. Regulated by alteration of quaternary structure. Exhibits burst rates of DNA synthesis are about 5 times faster in the presence of POLD4 (Pol-delta4 complex) than in its absence (Pol-delta3 complex), while the affinity of the enzyme for its DNA and dNTP substrates appears unchanged. The Pol-delta3 complex is more likely to proofread DNA synthesis because it cleaves single-stranded DNA twice as fast and transfers mismatched DNA from the polymerase to the exonuclease sites 9 times faster compared to the Pol-delta3 complex. Pol-delta3 also extends mismatched primers 3 times more slowly in the absence of POLD4. The conversion of Pol-delta4 into Pol-delta3 is induced by genotoxic stress or by replication stress leading POLD4 degradation. Stimulated in the presence of PCNA. This stimulation is further increased in the presence of KCTD13/PDIP1, most probably via direct interaction between KCTD13 and POLD2. Its function is as follows. As the catalytic component of the trimeric (Pol-delta3 complex) and tetrameric DNA polymerase delta complexes (Pol-delta4 complex), plays a crucial role in high fidelity genome replication, including in lagging strand synthesis, and repair. Exhibits both DNA polymerase and 3'- to 5'-exonuclease activities. Requires the presence of accessory proteins POLD2, POLD3 and POLD4 for full activity. Depending upon the absence (Pol-delta3) or the presence of POLD4 (Pol-delta4), displays differences in catalytic activity. Most notably, expresses higher proofreading activity in the context of Pol-delta3 compared with that of Pol-delta4. Although both Pol-delta3 and Pol-delta4 process Okazaki fragments in vitro, Pol-delta3 may be better suited to fulfill this task, exhibiting near-absence of strand displacement activity compared to Pol-delta4 and stalling on encounter with the 5'-blocking oligonucleotides. Pol-delta3 idling process may avoid the formation of a gap, while maintaining a nick that can be readily ligated. Along with DNA polymerase kappa, DNA polymerase delta carries out approximately half of nucleotide excision repair (NER) synthesis following UV irradiation. Under conditions of DNA replication stress, in the presence of POLD3 and POLD4, may catalyze the repair of broken replication forks through break-induced replication (BIR). Involved in the translesion synthesis (TLS) of templates carrying O6-methylguanine, 8oxoG or abasic sites. This Homo sapiens (Human) protein is DNA polymerase delta catalytic subunit.